The chain runs to 125 residues: Small ribosomal subunit protein bS6m (125 aa).

It belongs to the bacterial ribosomal protein bS6 family. Component of the mitochondrial small ribosomal subunit (mt-SSU). Mature mammalian 55S mitochondrial ribosomes consist of a small (28S) and a large (39S) subunit. The 28S small subunit contains a 12S ribosomal RNA (12S mt-rRNA) and 30 different proteins. The 39S large subunit contains a 16S rRNA (16S mt-rRNA), a copy of mitochondrial valine transfer RNA (mt-tRNA(Val)), which plays an integral structural role, and 52 different proteins.

The protein localises to the mitochondrion. In Homo sapiens (Human), this protein is Small ribosomal subunit protein bS6m (MRPS6).